The primary structure comprises 35 residues: Natriuretic peptide TNPb (35 aa).

Residues C9 and C25 are joined by a disulfide bond.

Expressed by the venom gland.

Its subcellular location is the secreted. Snake venom natriuretic peptide that exhibits vasoactive and probable hypotensive activity. Is only weakly active on natriuretic peptide receptor-C (NPR3). Stimulates cGMP production through the natriuretic peptide receptor 1 (NPR1) with moderate potencies for the rat NPR1 (EC(50)=1200 nM), and very weak potencies over human NPR1 (30% activation at 10 uM). In vivo, does not impact systolic and diastolic blood pressure, as well as heart rate, when intravenously injected in conscious rabbits. Does not affect the bradycardia due to cardiac afferent stimulation (Bezold-Jarisch reflex). This Oxyuranus microlepidotus (Inland taipan) protein is Natriuretic peptide TNPb.